The following is a 49-amino-acid chain: Toxic protein HokB (49 aa).

The helical transmembrane segment at Asn-4–Thr-24 threads the bilayer.

The protein belongs to the Hok/Gef family.

It is found in the cell inner membrane. Toxic component of a type I toxin-antitoxin (TA) system. When overexpressed kills cells within minutes; causes collapse of the transmembrane potential and arrest of respiration. Expression leads to membrane depolarization; when protein levels are high enough depolarization probably leads to lowered metabolic activity which in turn induces some cells to enter the persistent state in which they transiently survive antibiotic exposure. Its toxic effect is probably neutralized by antisense antitoxin RNA SokB, which is encoded in trans on the opposite DNA strand. The polypeptide is Toxic protein HokB (Escherichia coli (strain K12)).